The primary structure comprises 304 residues: N-acetylmuramic acid 6-phosphate etherase (304 aa).

Positions 62 to 225 (IVEAFQQGGR…TTASMILIGK (164 aa)) constitute an SIS domain. E90 functions as the Proton donor in the catalytic mechanism. E121 is a catalytic residue.

Belongs to the GCKR-like family. MurNAc-6-P etherase subfamily. In terms of assembly, homodimer.

The catalysed reaction is N-acetyl-D-muramate 6-phosphate + H2O = N-acetyl-D-glucosamine 6-phosphate + (R)-lactate. It functions in the pathway amino-sugar metabolism; 1,6-anhydro-N-acetylmuramate degradation. The protein operates within amino-sugar metabolism; N-acetylmuramate degradation. Its pathway is cell wall biogenesis; peptidoglycan recycling. Functionally, specifically catalyzes the cleavage of the D-lactyl ether substituent of MurNAc 6-phosphate, producing GlcNAc 6-phosphate and D-lactate. Together with AnmK, is also required for the utilization of anhydro-N-acetylmuramic acid (anhMurNAc) either imported from the medium or derived from its own cell wall murein, and thus plays a role in cell wall recycling. The protein is N-acetylmuramic acid 6-phosphate etherase of Glaesserella parasuis serovar 5 (strain SH0165) (Haemophilus parasuis).